Here is a 309-residue protein sequence, read N- to C-terminus: MPSMELSVISPCSSANLGPGYDVLAIAFDAFYDQVNVMLSDKLRILADEIPVQPDKNTAGLTALKMIEDFGIKDGIKISIKKGIPYGLGLGSSGSSAAAAAYAINNLFALGLERKDLIKYAAVGELASSGSPHPDNVSASILGGLVIVSPEGISAKRIEVSDQFKFLLVIADLKIRDKTKYARSLVPSGVSMGDHKRNTSRVASLIAGLMSGDRELVSTGMNDDIVEAAREPIFPYYRRVKDTAIESGAVGAVVSGAGPSILVVYDNKTETKQMIRKISRIYEGMGISVNFATPNVADGVREVANPLAD.

Pro-85–Ser-95 serves as a coordination point for ATP.

The protein belongs to the GHMP kinase family. Homoserine kinase subfamily.

It is found in the cytoplasm. It carries out the reaction L-homoserine + ATP = O-phospho-L-homoserine + ADP + H(+). It functions in the pathway amino-acid biosynthesis; L-threonine biosynthesis; L-threonine from L-aspartate: step 4/5. Its function is as follows. Catalyzes the ATP-dependent phosphorylation of L-homoserine to L-homoserine phosphate. In Thermoplasma volcanium (strain ATCC 51530 / DSM 4299 / JCM 9571 / NBRC 15438 / GSS1), this protein is Homoserine kinase.